Consider the following 474-residue polypeptide: Cysteine--tRNA ligase (474 aa).

Cysteine 28 serves as a coordination point for Zn(2+). Residues 30-40 (ITVYDLCHLGH) carry the 'HIGH' region motif. Zn(2+)-binding residues include cysteine 209, histidine 234, and glutamate 238. The short motif at 269–273 (KMSKS) is the 'KMSKS' region element. Lysine 272 is a binding site for ATP.

This sequence belongs to the class-I aminoacyl-tRNA synthetase family. As to quaternary structure, monomer. The cofactor is Zn(2+).

It is found in the cytoplasm. The catalysed reaction is tRNA(Cys) + L-cysteine + ATP = L-cysteinyl-tRNA(Cys) + AMP + diphosphate. This Blochmanniella floridana protein is Cysteine--tRNA ligase.